A 338-amino-acid chain; its full sequence is NADPH dehydrogenase (338 aa).

Residue 22 to 25 (SPMC) participates in FMN binding. Tyr27 provides a ligand contact to substrate. 2 residues coordinate FMN: Ala59 and Gln101. 163-166 (HAAH) provides a ligand contact to substrate. FMN-binding positions include Arg214 and 306–307 (GR).

Belongs to the NADH:flavin oxidoreductase/NADH oxidase family. NamA subfamily. Homotetramer. FMN serves as cofactor.

It catalyses the reaction A + NADPH + H(+) = AH2 + NADP(+). In terms of biological role, catalyzes the reduction of the double bond of an array of alpha,beta-unsaturated aldehydes and ketones. It also reduces the nitro group of nitroester and nitroaromatic compounds. It could have a role in detoxification processes. The polypeptide is NADPH dehydrogenase (Listeria innocua serovar 6a (strain ATCC BAA-680 / CLIP 11262)).